The following is an 85-amino-acid chain: MSSGGLLLLLGLLTLCAELTPVSSRKRHPDCDKPPDTKICQTVVRAFYYKPSAKRCVQFRYGGCNGNGNHFKSDHLCRCECLEYR.

Positions 1–24 (MSSGGLLLLLGLLTLCAELTPVSS) are cleaved as a signal peptide. Positions 31 to 81 (CDKPPDTKICQTVVRAFYYKPSAKRCVQFRYGGCNGNGNHFKSDHLCRCEC) constitute a BPTI/Kunitz inhibitor domain. Intrachain disulfides connect Cys-31-Cys-81, Cys-40-Cys-64, and Cys-56-Cys-77.

Belongs to the venom Kunitz-type family. As to quaternary structure, heterodimer; disulfide-linked. The A chains have phospholipase A2 activity and the B chains show homology with the basic protease inhibitors. As to expression, expressed by the venom gland.

It is found in the secreted. Functionally, beta-2-bungarotoxin is a presynaptic neurotoxin of the venom. The B chain is homologous to venom basic protease inhibitors but has no protease inhibitor activity and blocks voltage-gated potassium channels (Kv). In Bungarus multicinctus (Many-banded krait), this protein is Kunitz-type serine protease inhibitor homolog beta-bungarotoxin B2 chain.